A 140-amino-acid chain; its full sequence is ATP synthase epsilon chain (140 aa).

The protein belongs to the ATPase epsilon chain family. In terms of assembly, F-type ATPases have 2 components, CF(1) - the catalytic core - and CF(0) - the membrane proton channel. CF(1) has five subunits: alpha(3), beta(3), gamma(1), delta(1), epsilon(1). CF(0) has three main subunits: a, b and c.

It is found in the cell inner membrane. In terms of biological role, produces ATP from ADP in the presence of a proton gradient across the membrane. In Thermodesulfovibrio yellowstonii (strain ATCC 51303 / DSM 11347 / YP87), this protein is ATP synthase epsilon chain.